Consider the following 207-residue polypeptide: Large ribosomal subunit protein bL25 (207 aa).

It belongs to the bacterial ribosomal protein bL25 family. CTC subfamily. Part of the 50S ribosomal subunit; part of the 5S rRNA/L5/L18/L25 subcomplex. Contacts the 5S rRNA. Binds to the 5S rRNA independently of L5 and L18.

In terms of biological role, this is one of the proteins that binds to the 5S RNA in the ribosome where it forms part of the central protuberance. The polypeptide is Large ribosomal subunit protein bL25 (Paraburkholderia xenovorans (strain LB400)).